Here is a 788-residue protein sequence, read N- to C-terminus: 5-methyltetrahydropteroyltriglutamate--homocysteine methyltransferase (788 aa).

Residues Arg24 to Lys27 and Lys140 each bind 5-methyltetrahydropteroyltri-L-glutamate. Residues Ile463–Ser465 and Glu516 contribute to the L-homocysteine site. Residues Ile463–Ser465 and Glu516 contribute to the L-methionine site. Residues Arg547–Cys548 and Trp593 contribute to the 5-methyltetrahydropteroyltri-L-glutamate site. Asp631 contributes to the L-homocysteine binding site. Asp631 is a binding site for L-methionine. Glu637 contacts 5-methyltetrahydropteroyltri-L-glutamate. 3 residues coordinate Zn(2+): His673, Cys675, and Glu697. His726 acts as the Proton donor in catalysis. Cys758 is a binding site for Zn(2+).

This sequence belongs to the vitamin-B12 independent methionine synthase family. Zn(2+) serves as cofactor.

It catalyses the reaction 5-methyltetrahydropteroyltri-L-glutamate + L-homocysteine = tetrahydropteroyltri-L-glutamate + L-methionine. It functions in the pathway amino-acid biosynthesis; L-methionine biosynthesis via de novo pathway; L-methionine from L-homocysteine (MetE route): step 1/1. In terms of biological role, catalyzes the transfer of a methyl group from 5-methyltetrahydrofolate to homocysteine resulting in methionine formation. This is 5-methyltetrahydropteroyltriglutamate--homocysteine methyltransferase from Rhodopseudomonas palustris (strain ATCC BAA-98 / CGA009).